A 138-amino-acid chain; its full sequence is Ig heavy chain V region TEPC 1017 (138 aa).

An N-terminal signal peptide occupies residues Met1–Gln20. Positions Val21–Thr49 are framework-1. Cys41 and Cys115 are joined by a disulfide. The tract at residues Asn50–His54 is complementarity-determining-1. The interval Trp55 to Gly68 is framework-2. The segment at Glu69–Asn85 is complementarity-determining-2. The interval Lys86 to Arg117 is framework-3. Residues Ser118–Tyr127 form a complementarity-determining-3 region. The interval Trp128–Ala138 is framework-4.

The polypeptide is Ig heavy chain V region TEPC 1017 (Mus musculus (Mouse)).